The primary structure comprises 102 residues: Large ribosomal subunit protein bL21 (102 aa).

This sequence belongs to the bacterial ribosomal protein bL21 family. In terms of assembly, part of the 50S ribosomal subunit. Contacts protein L20.

In terms of biological role, this protein binds to 23S rRNA in the presence of protein L20. In Limosilactobacillus fermentum (strain NBRC 3956 / LMG 18251) (Lactobacillus fermentum), this protein is Large ribosomal subunit protein bL21.